We begin with the raw amino-acid sequence, 257 residues long: UPF0246 protein YaaA (257 aa).

The protein belongs to the UPF0246 family.

In Salmonella typhi, this protein is UPF0246 protein YaaA.